The sequence spans 381 residues: Gustatory and pheromone receptor 39a, isoform D (381 aa).

The Cytoplasmic segment spans residues 1-43; the sequence is MKRNAFEELRVQLRTLKWLGVLRFTIDFNKCLVRENASEERSA. The helical transmembrane segment at 44–64 threads the bilayer; it reads WLYLIGVVGITCSLIVYSTYF. Residues 65-78 lie on the Extracellular side of the membrane; the sequence is PSHFIMGKHNTTGN. Asn74 carries an N-linked (GlcNAc...) asparagine glycan. Residues 79-101 traverse the membrane as a helical segment; it reads CYALINIRSCSIVTMLIYTQLYI. Over 102–128 the chain is Cytoplasmic; it reads QRFRFVALLQSILRFNQISGSHREEGR. Residues 129 to 149 traverse the membrane as a helical segment; the sequence is FAFYYYTHLSLLIICMLNYAY. The Extracellular portion of the chain corresponds to 150–172; sequence GYWTAGVRLTTIPIYLLQYGFSY. A helical transmembrane segment spans residues 173 to 193; the sequence is LFLGQVVVLFACIQQILLSIL. Residues 194-234 lie on the Cytoplasmic side of the membrane; the sequence is KYYNQVVLKNIKSSKESREFYYNFCKYNQVIWLSYTEINHC. A helical transmembrane segment spans residues 235–255; it reads FGLLLLLVTGLILLITPSGPF. Topologically, residues 256-273 are extracellular; sequence YLVSTIFEGRFRQNWQFS. A helical transmembrane segment spans residues 274–294; the sequence is LMSFTAILWSLPWIVLLVLAM. Topologically, residues 295–350 are cytoplasmic; sequence GRNDVQKEANKTAKMLTKVPRTGTGLDRMIEKFLLKNLRQKPILTAYGFFALDKST. Residues 351 to 371 form a helical membrane-spanning segment; sequence LFKLFTAIFTYMVILVQFKEM. The Extracellular segment spans residues 372–381; that stretch reads ENSTKSINKF. An N-linked (GlcNAc...) asparagine glycan is attached at Asn373.

The protein belongs to the insect chemoreceptor superfamily. Gustatory receptor (GR) family. Gr21a subfamily. Expressed in the adult labellar chemosensory neurons and adult thorax and abdomen.

The protein resides in the cell membrane. In terms of biological role, gustatory receptor which mediates acceptance or avoidance behavior, depending on its substrates. Plays a role in sustaining courtship behavior in males, possibly through the reception of a stimulating arrestant pheromone. The polypeptide is Gustatory and pheromone receptor 39a, isoform D (Gr39a) (Drosophila melanogaster (Fruit fly)).